A 513-amino-acid polypeptide reads, in one-letter code: Calcium-binding mitochondrial carrier protein SCaMC-2 (513 aa).

The Mitochondrial intermembrane portion of the chain corresponds to 1–233 (MARPRSLVSP…EKQTGMWWRH (233 aa)). 4 consecutive EF-hand domains span residues 55-90 (EHET…LGVH), 91-124 (RTEL…RDHE), 122-157 (DHEK…LGVN), and 158-193 (ISEQ…HPAE). Positions 68, 70, 72, 79, 104, 106, 108, 110, and 115 each coordinate Ca(2+). 3 Solcar repeats span residues 228-314 (GMWW…MKRI), 322-407 (LGIH…LKNA), and 419-507 (PGVF…LKLT). The helical transmembrane segment at 234-251 (LVAGGGAGAVSRTCTAPL) threads the bilayer. At 252 to 288 (DRLKVLMQVHASRSNNMSMLGGFTQMIREGGIRSLWR) the chain is on the mitochondrial matrix side. Residues 289–308 (GNGINVIKIAPESAIKFMAY) form a helical membrane-spanning segment. The Mitochondrial intermembrane segment spans residues 309–331 (EQMKRIIGSDQETLGIHERLVAG). A helical transmembrane segment spans residues 332 to 345 (SLAGVIAQSSIYPM). Topologically, residues 346-381 (EVLKTRMALRKTGQYQGMLDCGKKILLKEGVSAFYK) are mitochondrial matrix. The helical transmembrane segment at 382–401 (GYVPNMLGIIPYAGIDLAVY) threads the bilayer. The Mitochondrial intermembrane segment spans residues 402–424 (ETLKNAWLQRYATSSADPGVFVL). Residues 425-442 (LACGTISSTCGQLASYPL) traverse the membrane as a helical segment. At 443 to 481 (ALVRTRMQAEASVEGAPQMTMSKLFKHIVKTEGAFGLYR) the chain is on the mitochondrial matrix side. Residues 482-501 (GLAPNFMKVIPAVSISYVVY) form a helical membrane-spanning segment. Topologically, residues 502-513 (ENLKLTLGVQSR) are mitochondrial intermembrane.

The protein belongs to the mitochondrial carrier (TC 2.A.29) family.

The protein localises to the mitochondrion inner membrane. In terms of biological role, calcium-dependent mitochondrial solute carrier. The protein is Calcium-binding mitochondrial carrier protein SCaMC-2 (slc25a25) of Xenopus tropicalis (Western clawed frog).